We begin with the raw amino-acid sequence, 411 residues long: Dihydrosphingosine 1-phosphate phosphatase C823.11 (411 aa).

Over 1-74 the chain is Lumenal; sequence MVHKKKNVDI…LDVYFMYTAT (74 aa). Residues 75–95 traverse the membrane as a helical segment; that stretch reads LGTHVFFMLALPIFFWSGCIY. Over 96–99 the chain is Cytoplasmic; the sequence is YTLD. Residues 100–120 traverse the membrane as a helical segment; the sequence is ITQLFAAGVYFSGCIKDYFCL. The segment at 115 to 123 is phosphatase sequence motif I; the sequence is KDYFCLPRP. The Lumenal segment spans residues 121–170; that stretch reads PRPRSPPMVRLTLSSDAEYEYGFPSTHTTNAMATGFYSLFLLLSMSDSMS. Residues 144–147 form a phosphatase sequence motif II region; it reads PSTH. Catalysis depends on histidine 147, which acts as the Proton donor. A helical transmembrane segment spans residues 171–191; sequence SISYYFLLSLVLLYIASISLG. Positions 191–202 are phosphatase sequence motif III; sequence GRIYCGMHGFMD. At 192 to 195 the chain is on the cytoplasmic side; the sequence is RIYC. The helical transmembrane segment at 196–216 threads the bilayer; that stretch reads GMHGFMDVSTGTILGVTLAIF. Catalysis depends on histidine 198, which acts as the Nucleophile. At 217–233 the chain is on the lumenal side; it reads QWKYADFFHNVWSSSST. The chain crosses the membrane as a helical span at residues 234 to 254; it reads SVPILSVVLALFFIWFHPQPA. Topologically, residues 255–259 are cytoplasmic; sequence ERCIC. The chain crosses the membrane as a helical span at residues 260–280; it reads LEDSISFISVIMGIDLGTWFA. The Lumenal portion of the chain corresponds to 281–293; sequence SPESLSHLHDNLN. Residues 294-314 form a helical membrane-spanning segment; it reads SYFLLKFFVRVLFGVCMILIW. Over 315–387 the chain is Cytoplasmic; that stretch reads KSFAKQALLA…VRFDIETIAR (73 aa). The chain crosses the membrane as a helical span at residues 388 to 408; that stretch reads IIVYSGIGFLCTYFAPKVFLK. Over 409 to 411 the chain is Lumenal; the sequence is WKI.

Belongs to the type 2 lipid phosphate phosphatase family.

It is found in the endoplasmic reticulum membrane. Functionally, dihydrosphingosine 1-phosphate phosphatase required for efficient ceramide synthesis from exogenous sphingoid bases. Involved in endocytosis and calcium-mediated signaling. The sequence is that of Dihydrosphingosine 1-phosphate phosphatase C823.11 from Schizosaccharomyces pombe (strain 972 / ATCC 24843) (Fission yeast).